A 255-amino-acid polypeptide reads, in one-letter code: Indole-3-glycerol phosphate synthase (255 aa).

This sequence belongs to the TrpC family.

It catalyses the reaction 1-(2-carboxyphenylamino)-1-deoxy-D-ribulose 5-phosphate + H(+) = (1S,2R)-1-C-(indol-3-yl)glycerol 3-phosphate + CO2 + H2O. It participates in amino-acid biosynthesis; L-tryptophan biosynthesis; L-tryptophan from chorismate: step 4/5. The sequence is that of Indole-3-glycerol phosphate synthase from Streptococcus sanguinis (strain SK36).